Here is a 598-residue protein sequence, read N- to C-terminus: Transcriptional repressor tup12 (598 aa).

Residues 118-177 (IASGVVPQSSKTKHGRNSVSFGKYGNAGPFNSDNSSKPLILNNGSSGGTPKNLRSPAIDS) are disordered. WD repeat units follow at residues 285–325 (EPPI…AMVF), 332–371 (LITL…QQIR), 374–413 (DIAQ…RTVC), 415–454 (WDVE…KVIR), 456–495 (WTSS…NTIK), 510–549 (YKEG…RTIQ), and 552–585 (SPDS…ATGS).

It belongs to the WD repeat TUP1 family.

Functionally, transcriptional repressor. The sequence is that of Transcriptional repressor tup12 (tup12) from Schizosaccharomyces pombe (strain 972 / ATCC 24843) (Fission yeast).